The sequence spans 211 residues: SAGA-associated factor 11 homolog 1 (211 aa).

The SGF11-type zinc-finger motif lies at 115–136; sequence CTCPNCDRLVAAARFAPHLEKC. The disordered stretch occupies residues 149–211; sequence RRLATKEGSS…GSKKNNGKTF (63 aa). The segment covering 157–166 has biased composition (low complexity); it reads SSASTSSTST. Ser187 is subject to Phosphoserine. Residues 197-211 show a composition bias toward low complexity; that stretch reads SSRNNGSKKNNGKTF.

The protein belongs to the SGF11 family. Component of some SAGA transcription coactivator-HAT complexes, at least composed of Ada2b, not/nonstop, Pcaf/Gcn5, Sgf11 and Spt3. Within the SAGA complex, Sgf11, e(y)2, and not/nonstop form an additional subcomplex of SAGA called the DUB module (deubiquitination module). Interacts directly with not/nonstop. Interacts with the AMEX complex component xmas-2. Interacts with Cbp80; important for promoter recruitment of Sgf11 that is not associated with the DUB module.

Its subcellular location is the nucleus. The protein resides in the nucleoplasm. It localises to the cytoplasm. Its function is as follows. Component of the transcription regulatory histone acetylation (HAT) complex SAGA, a multiprotein complex that activates transcription by remodeling chromatin and mediating histone acetylation and deubiquitination. Within the SAGA complex, participates in a subcomplex that specifically deubiquitinates histone H2B. The SAGA complex is recruited to specific gene promoters by activators, where it is required for transcription. Required for nuclear receptor-mediated transactivation. Binds independently on SAGA to promoters in an RNA-dependent manner. Binds to mRNA and is essential for total mRNA export from the nucleus. Required to counteract heterochromatin silencing. Controls the development of neuronal connectivity in visual system by being required for accurate axon targeting in the optic lobe. Required for expression of ecdysone-induced genes such as br/broad. This chain is SAGA-associated factor 11 homolog 1, found in Drosophila grimshawi (Hawaiian fruit fly).